A 309-amino-acid chain; its full sequence is 2-dehydro-3-deoxygluconokinase (309 aa).

Residues 28-32 (GDTLN), tyrosine 88, 102-104 (YWR), and arginine 170 contribute to the substrate site. ATP is bound by residues 168–170 (NYR), 228–233 (KRGADS), and 261–264 (AAGD). A substrate-binding site is contributed by aspartate 264. The active-site Proton acceptor is aspartate 264.

Belongs to the carbohydrate kinase PfkB family.

The catalysed reaction is 2-dehydro-3-deoxy-D-gluconate + ATP = 2-dehydro-3-deoxy-6-phospho-D-gluconate + ADP + H(+). The protein operates within carbohydrate acid metabolism; 2-dehydro-3-deoxy-D-gluconate degradation; D-glyceraldehyde 3-phosphate and pyruvate from 2-dehydro-3-deoxy-D-gluconate: step 1/2. In terms of biological role, catalyzes the phosphorylation of 2-keto-3-deoxygluconate (KDG) to produce 2-keto-3-deoxy-6-phosphogluconate (KDPG). The protein is 2-dehydro-3-deoxygluconokinase (kdgK) of Escherichia coli (strain K12).